The primary structure comprises 177 residues: CRIB domain-containing protein RIC8 (177 aa).

Positions Ile-17–Gly-30 constitute a CRIB domain. Basic and acidic residues predominate over residues Ser-72–Ser-89. Residues Ser-72–Thr-177 form a disordered region. A compositionally biased stretch (low complexity) spans Gly-158 to Ser-171.

Functionally, functions as a downstream effector of Rho-related GTP binding proteins of the 'Rho of Plants' (ROPs) family. Participates in the propagation of ROP GTPase signals in specific cellular responses. In Arabidopsis thaliana (Mouse-ear cress), this protein is CRIB domain-containing protein RIC8 (RIC8).